We begin with the raw amino-acid sequence, 74 residues long: Pelophylaxin-3 (74 aa).

Residues 1 to 22 (MFTLKKSLLLVFFLGTISLSLC) form the signal peptide. The propeptide occupies 23 to 39 (EDERNADEDDGEMTEEV). Cys-68 and Cys-74 form a disulfide bridge.

Expressed by the skin glands.

The protein localises to the secreted. Functionally, antimicrobial peptide. The polypeptide is Pelophylaxin-3 (Pelophylax fukienensis (Fukien gold-striped pond frog)).